The chain runs to 410 residues: MEDGVYEPPDLTPEERMELENIRRRKQELLVEIQRLREELSEAMSEVEGLEANEGSKTLQRNRKMAMGRKKFNMDPKKGIQFLVENELLQNTPEEIARFLYKGEGLNKTAIGDYLGEREELNLAVLHAFVDLHEFTDLNLVQALRQFLWSFRLPGEAQKIDRMMEAFAQRYCLCNPGVFQSTDTCYVLSFAVIMLNTSLHNPNVRDKPGLERFVAMNRGINEGGDLPEELLRNLYDSIRNEPFKIPEDDGNDLTHTFFNPDREGWLLKLGAQAPSPPSLPGGRVKTWKRRWFILTDNCLYYFEYTTDKEPRGIIPLENLSIREVDDPRKPNCFELYIPNNKGQLIKACKTEADGRVVEGNHMVYRISAPTQEEKDEWIKSIQAAVSVDPFYEMLAARKKRISVKKKQEQP.

Positions 13 to 56 (PEERMELENIRRRKQELLVEIQRLREELSEAMSEVEGLEANEGS) form a coiled coil. The region spanning 54 to 241 (EGSKTLQRNR…RNLYDSIRNE (188 aa)) is the SEC7 domain. The region spanning 259 to 386 (NPDREGWLLK…WIKSIQAAVS (128 aa)) is the PH domain. A 1,2-diacyl-sn-glycero-3-phospho-(1D-myo-inositol-3,4,5-trisphosphate)-binding positions include 268-271 (KLGA), Arg-290, Tyr-301, Arg-311, Lys-349, Asn-360, and His-361. Residues 397-405 (RKKRISVKK) are C-terminal autoinhibitory region.

Heteromer. Composed of TAMALIN, CYTH2 and at least one GRM1. Interacts with ARRB1. Interacts with ARL4D; the interaction is direct. Directly interacts with CCDC120 through the coiled coil domain; this interaction stabilizes CCDC120, possibly by preventing its ubiquitination, and is required for neurite growth in neuroblastoma cells. Interacts (via N-terminal domain) with INAVA (via N-terminal domain).

It is found in the cell membrane. The protein localises to the cytoplasm. Its subcellular location is the cell projection. The protein resides in the growth cone. Its function is as follows. Acts as a guanine-nucleotide exchange factor (GEF). Promotes guanine-nucleotide exchange on ARF1, ARF3 and ARF6. Promotes the activation of ARF factors through replacement of GDP with GTP. The cell membrane form, in association with ARL4 proteins, recruits ARF6 to the plasma membrane. Involved in neurite growth. The protein is Cytohesin-2 (CYTH2) of Bos taurus (Bovine).